The sequence spans 335 residues: Legumin type B (335 aa).

Disordered stretches follow at residues 47-87 (PETQ…GNSV) and 102-155 (TEED…GRNG). Residues 105–118 (DTAKRLRSPRDKRN) are compositionally biased toward basic and acidic residues. Residues 135-144 (QQEEEEQEEE) are compositionally biased toward acidic residues. A Cupin type-1 domain is found at 167 to 314 (ENIAQPARAD…AFGLRQRQVT (148 aa)).

This sequence belongs to the 11S seed storage protein (globulins) family. Hexamer; each subunit is composed of an acidic and a basic chain derived from a single precursor and linked by a disulfide bond.

Its function is as follows. This protein found in the seeds of many leguminous and non-leguminous plants is the source of sulfur-containing amino acids in seed meals. This is Legumin type B (LEB7) from Vicia faba (Broad bean).